The following is a 94-amino-acid chain: Myosuppressin (94 aa).

Positions 1–24 are cleaved as a signal peptide; that stretch reads MMSPTLMILISITTMAILSGESFG. Positions 25–80 are excised as a propeptide; sequence AMPAQCNSEFLEELPPRLRKICVAIARIWDAREMNDFVDDREYRENLPRYDSSVKR. The residue at position 81 (Q81) is a Pyrrolidone carboxylic acid. At F90 the chain carries Phenylalanine amide.

Expressed throughout the nervous system (at protein level).

It localises to the secreted. In terms of biological role, myoinhibiting neuropeptide. In Camponotus floridanus (Florida carpenter ant), this protein is Myosuppressin.